Reading from the N-terminus, the 331-residue chain is tRNA N6-adenosine threonylcarbamoyltransferase (331 aa).

The Fe cation site is built by His108 and His112. Residues 129 to 133 (LVSGG), Asp161, Glu178, and Ser258 contribute to the substrate site. A Fe cation-binding site is contributed by Asp286.

This sequence belongs to the KAE1 / TsaD family. Fe(2+) is required as a cofactor.

The protein localises to the cytoplasm. The enzyme catalyses L-threonylcarbamoyladenylate + adenosine(37) in tRNA = N(6)-L-threonylcarbamoyladenosine(37) in tRNA + AMP + H(+). Its function is as follows. Required for the formation of a threonylcarbamoyl group on adenosine at position 37 (t(6)A37) in tRNAs that read codons beginning with adenine. Is probably involved in the transfer of the threonylcarbamoyl moiety of threonylcarbamoyl-AMP (TC-AMP) to the N6 group of A37. This is tRNA N6-adenosine threonylcarbamoyltransferase from Caldivirga maquilingensis (strain ATCC 700844 / DSM 13496 / JCM 10307 / IC-167).